The sequence spans 478 residues: Cysteine protease ATG4B (478 aa).

Residues 1 to 15 (MTSLPDRGVSSSSSD) are compositionally biased toward polar residues. The tract at residues 1 to 31 (MTSLPDRGVSSSSSDPLCEGNIAPCSSSSEQ) is disordered. Cys-164 functions as the Nucleophile in the catalytic mechanism. Residues Asp-361 and His-363 contribute to the active site.

The protein belongs to the peptidase C54 family. As to quaternary structure, interacts with ATG8.

It localises to the cytoplasm. The enzyme catalyses [protein]-C-terminal L-amino acid-glycyl-phosphatidylethanolamide + H2O = [protein]-C-terminal L-amino acid-glycine + a 1,2-diacyl-sn-glycero-3-phosphoethanolamine. Functionally, cysteine protease that plays a key role in autophagy by mediating both proteolytic activation and delipidation of ATG8 family proteins. The protease activity is required for proteolytic activation of ATG8 family proteins: cleaves the C-terminal amino acid of ATG8 proteins to reveal a C-terminal glycine. Exposure of the glycine at the C-terminus is essential for ATG8 proteins conjugation to phosphatidylethanolamine (PE) and insertion to membranes, which is necessary for autophagy. In addition to the protease activity, also mediates delipidation of PE-conjugated ATG8 proteins. The chain is Cysteine protease ATG4B (ATG4B) from Oryza sativa subsp. japonica (Rice).